Consider the following 316-residue polypeptide: Acetaldehyde dehydrogenase (316 aa).

Residue 12-15 (SGNI) participates in NAD(+) binding. The active-site Acyl-thioester intermediate is the Cys-132. NAD(+) is bound by residues 163–171 (SAGPGTRAN) and Asn-289.

Belongs to the acetaldehyde dehydrogenase family.

The enzyme catalyses acetaldehyde + NAD(+) + CoA = acetyl-CoA + NADH + H(+). The protein is Acetaldehyde dehydrogenase (bphG) of Bordetella avium (strain 197N).